The chain runs to 152 residues: UPF0266 membrane protein YobD (152 aa).

3 helical membrane passes run 6–26 (LVLILFIAALLAFAIYDQFIM), 45–65 (IDSVIFVGLIVILIYNNVTNH), and 67–87 (ALITTWLLSALALMGFYIFWI).

This sequence belongs to the UPF0266 family.

The protein localises to the cell inner membrane. The chain is UPF0266 membrane protein YobD from Escherichia coli O45:K1 (strain S88 / ExPEC).